Reading from the N-terminus, the 888-residue chain is Potassium channel AKT6 (888 aa).

The Cytoplasmic segment spans residues 1 to 84 (MEKKKVWFWG…PFDPRYRAWE (84 aa)). The tract at residues 10–31 (GVKDDGEGGGGRGGGRTKDAED) is disordered. The chain crosses the membrane as a helical span at residues 85–105 (TFLVFLVLYTAWASPFEFGFL). Over 106 to 113 (QKPRPPLS) the chain is Extracellular. A helical membrane pass occupies residues 114-134 (ILDNIVNGFFAVDIVLTFFVA). At 135–155 (FLDKVTYLLVDDPKRIAWRYA) the chain is on the cytoplasmic side. The helical transmembrane segment at 156–176 (STWLIFDVVSTFPYEIFGSLL) threads the bilayer. Residues 177–184 (HESIQGYG) are Extracellular-facing. The helical; Voltage-sensor transmembrane segment at 185-205 (IFSMLRLWRLRRVSNCFARLE) threads the bilayer. Residues 206-219 (KDRKYSYFWVRCSK) lie on the Cytoplasmic side of the membrane. The chain crosses the membrane as a helical span at residues 220 to 240 (LLLVTLFVIHCGACFLYSIAA). Residues 241-267 (HYPDPSKTFMALTDENWKESPIAVRYN) lie on the Extracellular side of the membrane. Positions 268-287 (TAMYWSITTFSTTGYGDIHG) form an intramembrane region, pore-forming. Residues 288 to 291 (VNSR) lie on the Extracellular side of the membrane. The helical transmembrane segment at 292 to 312 (EMTFILFYMVFNLGLSAYIIG) threads the bilayer. Topologically, residues 313-888 (NMTNLVVHVT…GDFLLLSRDP (576 aa)) are cytoplasmic. Position 398-519 (398-519 (LFHGISNDLL…IMNNLLQHLK (122 aa))) interacts with a nucleoside 3',5'-cyclic phosphate. ANK repeat units follow at residues 543–572 (DLPLSLCFAAARGDDLLLHQLLRRGSSPNE), 576–605 (DGRTALHIAASKGSHYCVVLLLEHGADPNI), 609–638 (EGNVPLWEAIIGRHREIAKLLAENGAKLSL), 640–669 (SVSYFSGLAVEKNCLDALKDIIKYGGDVTL), and 673–702 (NGTTALHRAVSEGHLEIVKFLLDQGADLDW). Residues 822 to 888 (RVTISSPENG…GDFLLLSRDP (67 aa)) enclose the KHA domain.

This sequence belongs to the potassium channel family. Plant (TC 1.A.1.4) subfamily. In terms of assembly, the potassium channel is probably composed of a homo- or heterotetrameric complex of pore-forming subunits. As to expression, predominantly expressed in flowers; especially in pollen.

The protein localises to the membrane. In terms of biological role, highly selective inward-rectifying potassium channel that could mediate potassium uptake in the pollen membrane. Plays an important role in pollen tube development. Assuming opened or closed conformations in response to the voltage difference across the membrane, the channel is activated by hyperpolarization. May interact with the cytoskeleton or with regulatory proteins. This Arabidopsis thaliana (Mouse-ear cress) protein is Potassium channel AKT6 (AKT6).